The primary structure comprises 386 residues: Formate-dependent phosphoribosylglycinamide formyltransferase (386 aa).

N(1)-(5-phospho-beta-D-ribosyl)glycinamide is bound by residues 15-16 (EL) and Glu75. ATP-binding positions include Arg107, Lys148, 153–158 (SSGKGQ), 188–191 (EQFI), and Glu196. In terms of domain architecture, ATP-grasp spans 112 to 301 (ALAAQQLNLQ…EFELHLRAIV (190 aa)). Mg(2+) contacts are provided by Glu260 and Glu272. Residues Asp279, Lys349, and 356 to 357 (RR) each bind N(1)-(5-phospho-beta-D-ribosyl)glycinamide.

The protein belongs to the PurK/PurT family. In terms of assembly, homodimer.

The enzyme catalyses N(1)-(5-phospho-beta-D-ribosyl)glycinamide + formate + ATP = N(2)-formyl-N(1)-(5-phospho-beta-D-ribosyl)glycinamide + ADP + phosphate + H(+). The protein operates within purine metabolism; IMP biosynthesis via de novo pathway; N(2)-formyl-N(1)-(5-phospho-D-ribosyl)glycinamide from N(1)-(5-phospho-D-ribosyl)glycinamide (formate route): step 1/1. Its function is as follows. Involved in the de novo purine biosynthesis. Catalyzes the transfer of formate to 5-phospho-ribosyl-glycinamide (GAR), producing 5-phospho-ribosyl-N-formylglycinamide (FGAR). Formate is provided by PurU via hydrolysis of 10-formyl-tetrahydrofolate. This is Formate-dependent phosphoribosylglycinamide formyltransferase from Francisella tularensis subsp. novicida (strain U112).